The primary structure comprises 439 residues: GTPase Obg (439 aa).

The region spanning 4–162 (IEFIDVVDIY…KHIQLELKLL (159 aa)) is the Obg domain. In terms of domain architecture, OBG-type G spans 163-336 (ADVGLIGYPN…LKYAMWDIIK (174 aa)). Residues 169 to 176 (GYPNVGKS), 194 to 198 (FTTLV), 218 to 221 (DIPG), 288 to 291 (NKSD), and 317 to 319 (SAV) each bind GTP. The Mg(2+) site is built by serine 176 and threonine 196. The 79-residue stretch at 361-439 (LVLPDRVDIK…VEGVDFIFKE (79 aa)) folds into the OCT domain.

This sequence belongs to the TRAFAC class OBG-HflX-like GTPase superfamily. OBG GTPase family. As to quaternary structure, monomer. Mg(2+) serves as cofactor.

Its subcellular location is the cytoplasm. In terms of biological role, an essential GTPase which binds GTP, GDP and possibly (p)ppGpp with moderate affinity, with high nucleotide exchange rates and a fairly low GTP hydrolysis rate. Plays a role in control of the cell cycle, stress response, ribosome biogenesis and in those bacteria that undergo differentiation, in morphogenesis control. In Fervidobacterium nodosum (strain ATCC 35602 / DSM 5306 / Rt17-B1), this protein is GTPase Obg.